The sequence spans 56 residues: Keratin-associated protein 20-1 (56 aa).

This sequence belongs to the KRTAP type 20 family. As to quaternary structure, interacts with hair keratins.

In the hair cortex, hair keratin intermediate filaments are embedded in an interfilamentous matrix, consisting of hair keratin-associated proteins (KRTAP), which are essential for the formation of a rigid and resistant hair shaft through their extensive disulfide bond cross-linking with abundant cysteine residues of hair keratins. The matrix proteins include the high-sulfur and high-glycine-tyrosine keratins. The chain is Keratin-associated protein 20-1 (KRTAP20-1) from Homo sapiens (Human).